We begin with the raw amino-acid sequence, 218 residues long: NAD(P)H-quinone oxidoreductase subunit I (218 aa).

4Fe-4S ferredoxin-type domains lie at 55 to 84 and 95 to 124; these read GRIH…VDWV and RNYS…MTEE. The [4Fe-4S] cluster site is built by Cys64, Cys67, Cys70, Cys74, Cys104, Cys107, Cys110, and Cys114. Residues 168–218 form a disordered region; that stretch reads EVQPHGVDPSRPRAGQRPDQVLSSLKQNAGGSAGNEGESATSTNTSKGSAE. Polar residues predominate over residues 208–218; that stretch reads TSTNTSKGSAE.

The protein belongs to the complex I 23 kDa subunit family. NDH-1 is composed of at least 11 different subunits. [4Fe-4S] cluster is required as a cofactor.

It localises to the cellular thylakoid membrane. The enzyme catalyses a plastoquinone + NADH + (n+1) H(+)(in) = a plastoquinol + NAD(+) + n H(+)(out). It carries out the reaction a plastoquinone + NADPH + (n+1) H(+)(in) = a plastoquinol + NADP(+) + n H(+)(out). Its function is as follows. NDH-1 shuttles electrons from an unknown electron donor, via FMN and iron-sulfur (Fe-S) centers, to quinones in the respiratory and/or the photosynthetic chain. The immediate electron acceptor for the enzyme in this species is believed to be plastoquinone. Couples the redox reaction to proton translocation, and thus conserves the redox energy in a proton gradient. The sequence is that of NAD(P)H-quinone oxidoreductase subunit I from Synechococcus sp. (strain WH7803).